The following is a 138-amino-acid chain: Microneme antigen L2 (138 aa).

PAN domains are found at residues 9–78 (CFAH…PRSC) and 82–138 (CSDA…SKRA). 6 disulfide bridges follow: C9/C78, C34/C56, C38/C44, C82/C86, C107/C127, and C111/C117. A carbohydrate is bound at residue S18. Residues K59, Y66, and D71 each contribute to the a carbohydrate site.

As to quaternary structure, homodimer or heterodimer. In terms of processing, contains six disulfide bonds.

The protein localises to the cytoplasmic vesicle. It is found in the secretory vesicle. The protein resides in the microneme. Galactose-binding lectin. Plays a role in adhesion to the host cell. Has a potential role in invasion of host cells. The protein is Microneme antigen L2 of Sarcocystis muris.